A 129-amino-acid chain; its full sequence is Cuticle protein 12.5 (129 aa).

10 consecutive repeat copies span residues 7 to 10 (AAPA), 15 to 18 (AAPA), 23 to 26 (AAPA), 28 to 31 (AAPV), 37 to 40 (AAPA), 67 to 70 (AAPA), 79 to 82 (AAPA), 91 to 94 (AAPA), 103 to 106 (AAPA), and 117 to 120 (AAPA).

Component of the cuticle of migratory locust which contains more than 100 different structural proteins. This Locusta migratoria (Migratory locust) protein is Cuticle protein 12.5.